A 338-amino-acid polypeptide reads, in one-letter code: Phosphatidylinositol:ceramide inositolphosphotransferase (338 aa).

The Cytoplasmic portion of the chain corresponds to 1 to 36; the sequence is MTSHVTAHDVGGNEDIGTDHVPWYKQPLPLCTQVMR. Residues 37 to 57 traverse the membrane as a helical segment; sequence FILLLLLTVMFLGVAILVANA. At 58-87 the chain is on the extracellular side; it reads RMPDPEKVRPLPDLLLESIPKVALLENGTN. Residues 88 to 108 form a helical membrane-spanning segment; that stretch reads VIIFLLNATTVVVGFKVFLLE. Over 109–116 the chain is Cytoplasmic; sequence RHMNGLPR. The helical transmembrane segment at 117-137 threads the bilayer; sequence VTFLVGVPKIGSFLNRMAFGV. Residues 138–152 lie on the Extracellular side of the membrane; it reads LDSGRRPFPLKNVFP. A helical membrane pass occupies residues 153–173; that stretch reads IMAIRFLTSYAVVMVFRAFVI. At 174-189 the chain is on the cytoplasmic side; sequence MGTSYPATDNHCQNPQ. The chain crosses the membrane as a helical span at residues 190–210; it reads VIEHPVLNVILTLVTLGSGAI. The Extracellular segment spans residues 211 to 222; sequence HCGDLMFSGHTM. Residue histidine 220 is part of the active site. The helical transmembrane segment at 223–243 threads the bilayer; sequence ILSLAFILAWDYSPFLHPWAV. Topologically, residues 244–338 are cytoplasmic; that stretch reads RVWVSVLLPI…TDASAALPEH (95 aa). Catalysis depends on residues histidine 264 and aspartate 268.

It belongs to the sphingomyelin synthase family.

It localises to the membrane. Functionally, bidirectional lipid inositolphosphotransferase capable of converting phosphatidylinositol (PI) and ceramide to inositol-phosphorylceramide (IPC) and diacylglycerol (DAG) and vice versa. Direction is dependent on the relative concentrations of DAG and ceramide as phosphoinositol acceptors. Essential for viability of the pathogenic bloodstream stage of this human protozoan parasite and, consequently, can be considered as potential drug target. The chain is Phosphatidylinositol:ceramide inositolphosphotransferase from Leishmania major.